Reading from the N-terminus, the 477-residue chain is Glycogen synthase (477 aa).

Lys15 contributes to the ADP-alpha-D-glucose binding site.

This sequence belongs to the glycosyltransferase 1 family. Bacterial/plant glycogen synthase subfamily.

It catalyses the reaction [(1-&gt;4)-alpha-D-glucosyl](n) + ADP-alpha-D-glucose = [(1-&gt;4)-alpha-D-glucosyl](n+1) + ADP + H(+). It functions in the pathway glycan biosynthesis; glycogen biosynthesis. Its function is as follows. Synthesizes alpha-1,4-glucan chains using ADP-glucose. The polypeptide is Glycogen synthase (glgA) (Salmonella typhimurium (strain LT2 / SGSC1412 / ATCC 700720)).